We begin with the raw amino-acid sequence, 278 residues long: Large ribosomal subunit protein uL2 (278 aa).

2 disordered regions span residues 33 to 53 (LTEG…TSRG) and 221 to 278 (RGVA…KKKR). Residues 269-278 (IRSRHAKKKR) show a composition bias toward basic residues.

The protein belongs to the universal ribosomal protein uL2 family. As to quaternary structure, part of the 50S ribosomal subunit. Forms a bridge to the 30S subunit in the 70S ribosome.

In terms of biological role, one of the primary rRNA binding proteins. Required for association of the 30S and 50S subunits to form the 70S ribosome, for tRNA binding and peptide bond formation. It has been suggested to have peptidyltransferase activity; this is somewhat controversial. Makes several contacts with the 16S rRNA in the 70S ribosome. The polypeptide is Large ribosomal subunit protein uL2 (Novosphingobium aromaticivorans (strain ATCC 700278 / DSM 12444 / CCUG 56034 / CIP 105152 / NBRC 16084 / F199)).